The sequence spans 376 residues: 26S proteasome non-ATPase regulatory subunit 13 (376 aa).

The 168-residue stretch at serine 171–proline 338 folds into the PCI domain. An N6-acetyllysine modification is found at lysine 298.

This sequence belongs to the proteasome subunit S11 family. As to quaternary structure, component of the 19S proteasome regulatory particle complex. The 26S proteasome consists of a 20S core particle (CP) and two 19S regulatory subunits (RP). The regulatory particle is made of a lid composed of 9 subunits including PSMD13, a base containing 6 ATPases and few additional components.

Functionally, component of the 26S proteasome, a multiprotein complex involved in the ATP-dependent degradation of ubiquitinated proteins. This complex plays a key role in the maintenance of protein homeostasis by removing misfolded or damaged proteins, which could impair cellular functions, and by removing proteins whose functions are no longer required. Therefore, the proteasome participates in numerous cellular processes, including cell cycle progression, apoptosis, or DNA damage repair. This is 26S proteasome non-ATPase regulatory subunit 13 (Psmd13) from Mus musculus (Mouse).